The following is a 453-amino-acid chain: Aryl hydrocarbon receptor nuclear translocator homolog (453 aa).

Positions Phe44–Ile97 constitute a bHLH domain. PAS domains follow at residues Asp115–Lys193 and Ala277–Gln347. The PAC domain maps to Pro348 to Glu392. Residues Glu410–Gln453 form a disordered region.

Interacts with hif-1. Heterodimer; efficient DNA binding requires dimerization with another bHLH protein. Forms a heterodimer with ahr-1; binds DNA as heterodimer. Forms a heterodimer with PAS domain-containing protein cky-1; binds DNA as heterodimer. As to expression, expressed in many cell types throughout development, including hypodermal cells, intestinal cells, pharyngeal cells, and neurons. Expressed in every cell during embryo.

The protein resides in the nucleus. Its function is as follows. Transcription factor. Efficient DNA binding requires dimerization with another bHLH protein, such as cky-1 or ahr-1. Regulates transcription of target genes, probably acting in complex with cky-1. Has a role in cellular differentiation. Required for pharyngeal development. In collaboration with ahr-1 it is involved in RMEL/R and SDQR neuron cell migration. Acts in the cellular response to hypoxia. Involved in aggregation behavior by regulating soluble guanylate cyclase gene expression in the URX neurons. The chain is Aryl hydrocarbon receptor nuclear translocator homolog from Caenorhabditis elegans.